Here is a 290-residue protein sequence, read N- to C-terminus: Phosphoribosylaminoimidazole-succinocarboxamide synthase (290 aa).

This sequence belongs to the SAICAR synthetase family.

It catalyses the reaction 5-amino-1-(5-phospho-D-ribosyl)imidazole-4-carboxylate + L-aspartate + ATP = (2S)-2-[5-amino-1-(5-phospho-beta-D-ribosyl)imidazole-4-carboxamido]succinate + ADP + phosphate + 2 H(+). The protein operates within purine metabolism; IMP biosynthesis via de novo pathway; 5-amino-1-(5-phospho-D-ribosyl)imidazole-4-carboxamide from 5-amino-1-(5-phospho-D-ribosyl)imidazole-4-carboxylate: step 1/2. This chain is Phosphoribosylaminoimidazole-succinocarboxamide synthase, found in Haemophilus influenzae (strain PittEE).